The primary structure comprises 206 residues: Photosynthetic reaction center cytochrome c-551 (206 aa).

Helical transmembrane passes span 10–30 (IALA…VSFL), 49–69 (FMGW…LGKM), and 76–96 (KWFL…FFSL). Heme contacts are provided by cysteine 152, cysteine 155, histidine 156, and methionine 182.

In terms of assembly, component of the photosynthetic reaction center. The reaction center interacts with the Fenna-Matthews-Olson (FMO, fmoA) complex. In terms of processing, binds 1 heme group per subunit.

The protein localises to the cell inner membrane. Functionally, monoheme cytochrome which is the immediate electron donor to P840 of the photosynthetic reaction center complex. The protein is Photosynthetic reaction center cytochrome c-551 (pscC) of Chlorobaculum parvum (strain DSM 263 / NCIMB 8327) (Chlorobium vibrioforme subsp. thiosulfatophilum).